The sequence spans 98 residues: NADH-ubiquinone oxidoreductase chain 4L (98 aa).

3 helical membrane passes run 2–22 (TLTTMNILLAFFFSLLGTLIF), 29–49 (TLLCLEGMMLSLFIMTTITAL), and 61–81 (ITTLVFAACEAAVGLALLTMV).

The protein belongs to the complex I subunit 4L family. Core subunit of respiratory chain NADH dehydrogenase (Complex I) which is composed of 45 different subunits.

Its subcellular location is the mitochondrion inner membrane. The catalysed reaction is a ubiquinone + NADH + 5 H(+)(in) = a ubiquinol + NAD(+) + 4 H(+)(out). Functionally, core subunit of the mitochondrial membrane respiratory chain NADH dehydrogenase (Complex I) which catalyzes electron transfer from NADH through the respiratory chain, using ubiquinone as an electron acceptor. Part of the enzyme membrane arm which is embedded in the lipid bilayer and involved in proton translocation. The polypeptide is NADH-ubiquinone oxidoreductase chain 4L (MT-ND4L) (Oxymycterus rufus (Red hocicudo)).